The chain runs to 471 residues: Probable flavin-containing monoamine oxidase B (471 aa).

Position 406 is an S-8alpha-FAD cysteine (cysteine 406).

The protein belongs to the flavin monoamine oxidase family. Requires FAD as cofactor.

The catalysed reaction is a secondary aliphatic amine + O2 + H2O = a primary amine + an aldehyde + H2O2. The chain is Probable flavin-containing monoamine oxidase B (maoB-1) from Dictyostelium discoideum (Social amoeba).